The chain runs to 365 residues: Prostaglandin E2 receptor EP3 subtype (365 aa).

The interval 1–22 (MASMWAPEHSAEAHSNLSSTTD) is disordered. The Extracellular portion of the chain corresponds to 1-30 (MASMWAPEHSAEAHSNLSSTTDDCGSVSVA). Over residues 13–22 (AHSNLSSTTD) the composition is skewed to polar residues. Asn16 is a glycosylation site (N-linked (GlcNAc...) asparagine). The chain crosses the membrane as a helical span at residues 31–55 (FPITMMVTGFVGNALAMLLVSRSYR). Residues 56–68 (RRESKRKKSFLLC) are Cytoplasmic-facing. A helical transmembrane segment spans residues 69–89 (IGWLALTDLVGQLLTSPVVIL). Residues 90–108 (VYLSQRRWEQLDPSGRLCT) are Extracellular-facing. A disulfide bond links Cys107 and Cys184. The chain crosses the membrane as a helical span at residues 109–130 (FFGLTMTVFGLSSLLVASAMAV). The Cytoplasmic portion of the chain corresponds to 131-151 (ERALAIRAPHWYASHMKTRAT). A helical transmembrane segment spans residues 152-173 (PVLLGVWLSVLAFALLPVLGVG). Topologically, residues 174 to 203 (RYSVQWPGTWCFISTGPAGNETDPAREPGS) are extracellular. N-linked (GlcNAc...) asparagine glycosylation is present at Asn193. Residues 204–229 (VAFASAFACLGLLALVVTFACNLATI) form a helical membrane-spanning segment. Topologically, residues 230–259 (KALVSRCRAKAAVSQSSAQWGRITTETAIQ) are cytoplasmic. A helical transmembrane segment spans residues 260-283 (LMGIMCVLSVCWSPLLIMMLKMIF). Over 284–303 (NQMSVEQCKTQMGKEKECNS) the chain is Extracellular. The helical transmembrane segment at 304–325 (FLIAVRLASLNQILDPWVYLLL) threads the bilayer. Residues 326-365 (RKILLRKFCQIRDHTNYASSSTSLPCPGSSALMWSDQLER) lie on the Cytoplasmic side of the membrane.

Belongs to the G-protein coupled receptor 1 family. As to quaternary structure, interacts (via C-terminus) with MKLN1. Ligand binding is affected by cAMP-dependent phosphorylation in brain membranes. As to expression, detected in platelets. Kidney, uterus, and mastocytoma cells, and in a lesser amount in brain, thymus, lung, heart, stomach and spleen.

It is found in the cell membrane. Its function is as follows. Receptor for prostaglandin E2 (PGE2). Required for normal development of fever in response to pyrinogens, including IL1B, prostaglandin E2 and bacterial lipopolysaccharide (LPS). Required for normal potentiation of platelet aggregation by prostaglandin E2, and thus plays a role in the regulation of blood coagulation. Required for increased HCO3(-) secretion in the duodenum in response to mucosal acidification, and thereby contributes to the protection of the mucosa against acid-induced ulceration. Not required for normal kidney function, normal urine volume and osmolality. In terms of biological role, receptor for prostaglandin E2 (PGE2); ligand binding activates a signaling cascade via G(i) proteins that leads to inhibition of adenylate cyclase. Shows high agonist-independent constitutive inhibition of adenylate cyclase. Receptor for prostaglandin E2 (PGE2); ligand binding activates a signaling cascade via G(i) proteins that leads to inhibition of adenylate cyclase. Requires much higher ligand concentrations than isoform Alpha for activation. Does not display agonist-independent constitutive inhibition of adenylate cyclase. Functionally, receptor for prostaglandin E2 (PGE2); ligand binding can activate several distinct signaling cascades, resulting in activation or inhibition of adenylate cyclase. This chain is Prostaglandin E2 receptor EP3 subtype (Ptger3), found in Mus musculus (Mouse).